The following is a 147-amino-acid chain: Ponticulin-like protein C2 (147 aa).

The N-terminal stretch at 1–20 (MKFTKPLLLLIVAIIASSNA) is a signal peptide. The GPI-like-anchor amidated asparagine moiety is linked to residue Asn118. N-linked (GlcNAc...) asparagine glycosylation occurs at Asn118. The propeptide at 119–147 (SSESDSSDSTRIGASFALFALALLSMLAL) is removed in mature form.

The protein belongs to the ponticulin family. The GPI-like-anchor contains a phosphoceramide group, rather than a phosphatidyl group.

The protein resides in the cell membrane. This is Ponticulin-like protein C2 (ponC2) from Dictyostelium discoideum (Social amoeba).